We begin with the raw amino-acid sequence, 387 residues long: Zinc finger protein neuro-d4 (387 aa).

Glycyl lysine isopeptide (Lys-Gly) (interchain with G-Cter in SUMO2) cross-links involve residues Lys-106, Lys-129, and Lys-133. The C2H2-type zinc-finger motif lies at 195–218 (YVCDICGKRYKNRPGLSYHYTHTH). PHD-type zinc fingers lie at residues 271-328 (NGYC…CKSC) and 325-375 (CKSC…CLRH). Residues Cys-274, Cys-277, Cys-293, Cys-296, His-301, Cys-304, Cys-322, Cys-325, Cys-328, Cys-331, Cys-343, Cys-346, His-351, Cys-354, Cys-369, and Cys-372 each contribute to the Zn(2+) site.

This sequence belongs to the requiem/DPF family. Component of neuron-specific chromatin remodeling complex (nBAF complex) composed of at least, ARID1A/BAF250A or ARID1B/BAF250B, SMARCD1/BAF60A, SMARCD3/BAF60C, SMARCA2/BRM/BAF190B, SMARCA4/BRG1/BAF190A, SMARCB1/BAF47, SMARCC1/BAF155, SMARCE1/BAF57, SMARCC2/BAF170, DPF1/BAF45B, DPF3/BAF45C, ACTL6B/BAF53B and actin.

It is found in the cytoplasm. The protein resides in the nucleus. May have an important role in developing neurons by participating in regulation of cell survival, possibly as a neurospecific transcription factor. Belongs to the neuron-specific chromatin remodeling complex (nBAF complex). During neural development a switch from a stem/progenitor to a postmitotic chromatin remodeling mechanism occurs as neurons exit the cell cycle and become committed to their adult state. The transition from proliferating neural stem/progenitor cells to postmitotic neurons requires a switch in subunit composition of the npBAF and nBAF complexes. As neural progenitors exit mitosis and differentiate into neurons, npBAF complexes which contain ACTL6A/BAF53A and PHF10/BAF45A, are exchanged for homologous alternative ACTL6B/BAF53B and DPF1/BAF45B or DPF3/BAF45C subunits in neuron-specific complexes (nBAF). The npBAF complex is essential for the self-renewal/proliferative capacity of the multipotent neural stem cells. The nBAF complex along with CREST plays a role regulating the activity of genes essential for dendrite growth. The sequence is that of Zinc finger protein neuro-d4 from Homo sapiens (Human).